The chain runs to 141 residues: Flagellar assembly factor FliW (141 aa).

This sequence belongs to the FliW family. As to quaternary structure, interacts with translational regulator CsrA and flagellin(s).

The protein resides in the cytoplasm. Acts as an anti-CsrA protein, binds CsrA and prevents it from repressing translation of its target genes, one of which is flagellin. Binds to flagellin and participates in the assembly of the flagellum. In Clostridium acetobutylicum (strain ATCC 824 / DSM 792 / JCM 1419 / IAM 19013 / LMG 5710 / NBRC 13948 / NRRL B-527 / VKM B-1787 / 2291 / W), this protein is Flagellar assembly factor FliW.